Reading from the N-terminus, the 292-residue chain is Protein SETSIP (292 aa).

Residues 1–11 (MAPKRQSPLPL) are compositionally biased toward low complexity. Disordered regions lie at residues 1-43 (MAPK…EQQE) and 158-292 (LNES…GEDD). The stretch at 35-78 (KKGEKEQQEAIEHIDEVQNEIDRLNEQDSEEILKVEQKYNKLRQ) forms a coiled coil. Residues 237–292 (DMDDEEGGEDDDDDDDDGDEGEEELEDIDEGDEDEGEEDEDDDEGEEGEEDEGEDD) are compositionally biased toward acidic residues.

Belongs to the nucleosome assembly protein (NAP) family. In terms of tissue distribution, expressed in endothelial cell (EC) and protein-induced pluripotent stem (PiPS) endothelial cell (EC) (at protein level).

It is found in the cytoplasm. Its subcellular location is the nucleus. Plays a role as a transcriptional activator involved in the early stage of somatic cell reprogramming. Promotes the differentiation of protein-induced pluripotent stem (PiPS) cells into endothelial cells and the formation of vascular-like tubes (in vitro). Involved in the transcription induction of vascular endothelial-cadherin (VE-cadherin) expression. Associates to the VE-cadherin gene promoter. The chain is Protein SETSIP (SETSIP) from Homo sapiens (Human).